The sequence spans 104 residues: Viral histone-like protein (104 aa).

This sequence belongs to the bacterial histone-like protein family. In terms of assembly, homodimer.

It localises to the virion. Its activity is regulated as follows. Stilbene derivatives SD1 and SD4 disrupt the binding between pA104R and DNA and inhibit the viral replication in primary alveolar macrophages. Its function is as follows. DNA-binding protein that plays a critical role in nucleoid compaction, genome replication and DNA replication and transcription. Binds to both ssDNA and dsDNA with a binding site covering about 15 nucleotides. Displays DNA-supercoiling activity only when associated with the viral DNA topoisomerase 2. The sequence is that of Viral histone-like protein from African swine fever virus (strain Badajoz 1971 Vero-adapted) (Ba71V).